Reading from the N-terminus, the 141-residue chain is Large ribosomal subunit protein uL11 (141 aa).

This sequence belongs to the universal ribosomal protein uL11 family. As to quaternary structure, part of the ribosomal stalk of the 50S ribosomal subunit. Interacts with L10 and the large rRNA to form the base of the stalk. L10 forms an elongated spine to which L12 dimers bind in a sequential fashion forming a multimeric L10(L12)X complex. Post-translationally, one or more lysine residues are methylated.

Its function is as follows. Forms part of the ribosomal stalk which helps the ribosome interact with GTP-bound translation factors. The chain is Large ribosomal subunit protein uL11 from Oceanobacillus iheyensis (strain DSM 14371 / CIP 107618 / JCM 11309 / KCTC 3954 / HTE831).